We begin with the raw amino-acid sequence, 240 residues long: Tetrahydromethanopterin S-methyltransferase subunit A (240 aa).

Residues 1-218 are Cytoplasmic-facing; it reads MADKREPAPG…KFHSGVHAGK (218 aa). Histidine 85 is a 5-hydroxybenzimidazolylcob(I)amide binding site. A helical transmembrane segment spans residues 219-239; that stretch reads VEGAMIGLTITISLLGLLLLG. Position 240 (arginine 240) is a topological domain, extracellular.

The protein belongs to the MtrA family. The complex is composed of 8 subunits; MtrA, MtrB, MtrC, MtrD, MtrE, MtrF, MtrG and MtrH. It depends on 5-hydroxybenzimidazolylcob(I)amide as a cofactor.

The protein resides in the cell membrane. The enzyme catalyses 5-methyl-5,6,7,8-tetrahydromethanopterin + coenzyme M + 2 Na(+)(in) = 5,6,7,8-tetrahydromethanopterin + methyl-coenzyme M + 2 Na(+)(out). Its pathway is one-carbon metabolism; methanogenesis from CO(2); methyl-coenzyme M from 5,10-methylene-5,6,7,8-tetrahydromethanopterin: step 2/2. Part of a complex that catalyzes the formation of methyl-coenzyme M and tetrahydromethanopterin from coenzyme M and methyl-tetrahydromethanopterin. This is an energy-conserving, sodium-ion translocating step. The polypeptide is Tetrahydromethanopterin S-methyltransferase subunit A (Methanosarcina mazei (strain ATCC BAA-159 / DSM 3647 / Goe1 / Go1 / JCM 11833 / OCM 88) (Methanosarcina frisia)).